The following is a 168-amino-acid chain: RxLR effector protein PITG_12737 (168 aa).

The signal sequence occupies residues 1-20 (MRACAILVVAAAAVLTGSTA). The RxLR-dEER motif lies at 54–77 (RRLRKHKTVNTNSEMEYESEAEAR).

It belongs to the RxLR effector family.

The protein localises to the secreted. It localises to the host nucleus. The protein resides in the host cytoplasm. Its function is as follows. Effector that enhances P.infestans colonization of Nicotiana benthamiana leaves. The polypeptide is RxLR effector protein PITG_12737 (Phytophthora infestans (strain T30-4) (Potato late blight agent)).